A 234-amino-acid chain; its full sequence is HTH-type transcriptional regulator SmoD (234 aa).

The 69-residue stretch at 8–76 (LPMYMQIAEM…QGSGNYIRAV (69 aa)) folds into the HTH gntR-type domain. Positions 36 to 55 (ERDMAADLGIAVGTLRKSLA) form a DNA-binding region, H-T-H motif.

The protein resides in the cytoplasm. Functionally, probably regulates expression of genes involved in the sulfoquinovose monooxygenase (sulfo-SMO) pathway (smoABCDEFGHI). The protein is HTH-type transcriptional regulator SmoD of Agrobacterium fabrum (strain C58 / ATCC 33970) (Agrobacterium tumefaciens (strain C58)).